Reading from the N-terminus, the 1828-residue chain is Separin (1828 aa).

Residues 1647-1741 (KEAGSYILNP…SGALYECGSF (95 aa)) enclose the Peptidase C50 domain. Residue C1730 is part of the active site.

Interacts with cut2. Interacts with rad21.

The protein localises to the cytoplasm. It localises to the nucleus. It carries out the reaction All bonds known to be hydrolyzed by this endopeptidase have arginine in P1 and an acidic residue in P4. P6 is often occupied by an acidic residue or by a hydroxy-amino-acid residue, the phosphorylation of which enhances cleavage.. With respect to regulation, it is inactivated via its interaction with cut2, which probably covers its active site. Cut2 degradation at anaphase, liberates it and triggers rad21 cleavage. In terms of biological role, caspase-like protease, which plays a central role in the chromosome segregation by cleaving the rad21 subunit of the cohesin complex at the onset of anaphase. During most of the cell cycle, it is inactivated by securin/cut2 protein. It is also required for pointed nuclear formation. This is Separin (cut1) from Schizosaccharomyces pombe (strain 972 / ATCC 24843) (Fission yeast).